We begin with the raw amino-acid sequence, 352 residues long: Protein RecA (352 aa).

74–81 contacts ATP; it reads GPESSGKT.

Belongs to the RecA family.

It localises to the cytoplasm. In terms of biological role, can catalyze the hydrolysis of ATP in the presence of single-stranded DNA, the ATP-dependent uptake of single-stranded DNA by duplex DNA, and the ATP-dependent hybridization of homologous single-stranded DNAs. It interacts with LexA causing its activation and leading to its autocatalytic cleavage. The protein is Protein RecA of Ralstonia nicotianae (strain ATCC BAA-1114 / GMI1000) (Ralstonia solanacearum).